Consider the following 342-residue polypeptide: Protein BASIC PENTACYSTEINE6 (342 aa).

Residues 41–67 adopt a coiled-coil conformation; it reads AIQERNLAISEKKAAVAERDMAFLQRD. The segment at 41–76 is alanine-zipper; it reads AIQERNLAISEKKAAVAERDMAFLQRDTAIAERNNA. The disordered stretch occupies residues 143 to 199; the sequence is REMEPNDGLPTSPPAGSTLESAKPKRGKRVNPKATTQTAANKRGPKNQRKVKKESED. The segment at 164–195 is required for nucleus and nucleolus localization; the sequence is AKPKRGKRVNPKATTQTAANKRGPKNQRKVKK. A compositionally biased stretch (basic residues) spans 185–194; the sequence is RGPKNQRKVK. The short motif at 192-195 is the Nuclear localization signal element; the sequence is KVKK.

This sequence belongs to the BBR/BPC family. As to quaternary structure, homodimer. Heterodimer with BPC4. In terms of tissue distribution, expressed in seedlings, leaves and pistils. Detected in the base of flowers and tips of carpels, in sepal vasculature, in young rosette, in the lateral and tip of primary roots, and in ovule at the exception of the outer integument.

The protein resides in the nucleus. The protein localises to the nucleolus. In terms of biological role, transcriptional regulator that specifically binds to GA-rich elements (GAGA-repeats) present in regulatory sequences of genes involved in developmental processes. This is Protein BASIC PENTACYSTEINE6 (BPC6) from Arabidopsis thaliana (Mouse-ear cress).